Here is a 77-residue protein sequence, read N- to C-terminus: Exodeoxyribonuclease 7 small subunit (77 aa).

The protein belongs to the XseB family. As to quaternary structure, heterooligomer composed of large and small subunits.

The protein resides in the cytoplasm. It carries out the reaction Exonucleolytic cleavage in either 5'- to 3'- or 3'- to 5'-direction to yield nucleoside 5'-phosphates.. Bidirectionally degrades single-stranded DNA into large acid-insoluble oligonucleotides, which are then degraded further into small acid-soluble oligonucleotides. The protein is Exodeoxyribonuclease 7 small subunit of Clostridium acetobutylicum (strain ATCC 824 / DSM 792 / JCM 1419 / IAM 19013 / LMG 5710 / NBRC 13948 / NRRL B-527 / VKM B-1787 / 2291 / W).